The chain runs to 232 residues: Purine nucleoside phosphorylase DeoD-type (232 aa).

A purine D-ribonucleoside is bound at residue H4. Residues G20, R24, R43, and 87–90 contribute to the phosphate site; that span reads RVGS. Residues E162, 178–180, and 202–203 contribute to the a purine D-ribonucleoside site; these read EME and SD. D203 acts as the Proton donor in catalysis.

The protein belongs to the PNP/UDP phosphorylase family. As to quaternary structure, homohexamer; trimer of homodimers.

The catalysed reaction is a purine D-ribonucleoside + phosphate = a purine nucleobase + alpha-D-ribose 1-phosphate. It carries out the reaction a purine 2'-deoxy-D-ribonucleoside + phosphate = a purine nucleobase + 2-deoxy-alpha-D-ribose 1-phosphate. In terms of biological role, catalyzes the reversible phosphorolytic breakdown of the N-glycosidic bond in the beta-(deoxy)ribonucleoside molecules, with the formation of the corresponding free purine bases and pentose-1-phosphate. The sequence is that of Purine nucleoside phosphorylase DeoD-type from Bacillus velezensis (strain DSM 23117 / BGSC 10A6 / LMG 26770 / FZB42) (Bacillus amyloliquefaciens subsp. plantarum).